A 1442-amino-acid chain; its full sequence is DNA polymerase III PolC-type (1442 aa).

Residues 426–582 (YVVFDVETTG…YDTEATAYIF (157 aa)) enclose the Exonuclease domain.

It belongs to the DNA polymerase type-C family. PolC subfamily.

It is found in the cytoplasm. It carries out the reaction DNA(n) + a 2'-deoxyribonucleoside 5'-triphosphate = DNA(n+1) + diphosphate. Required for replicative DNA synthesis. This DNA polymerase also exhibits 3' to 5' exonuclease activity. The chain is DNA polymerase III PolC-type from Staphylococcus epidermidis (strain ATCC 12228 / FDA PCI 1200).